Here is a 238-residue protein sequence, read N- to C-terminus: MQKPKYKRIVLKLSGEALAGHNTYGIDNEVLNSIARQVVEVVRQEVQVAIVVGGGNIWRGVAGSAKGMDRATADYMGMLATVINALALQDALEQEGMGTRVMSAIEMKEVCEPYIRRRAIRHLEKGRVTIFAAGTGNPYFSTDTAAALRSAEIEAEVILMAKKVDGVYDADPVKNPAALKFDRLNYIDVLSRGLGVMDSTAASLCMDNGIPIIVFDLTREGNILKAVLGEEIGTYVGR.

12–15 (KLSG) serves as a coordination point for ATP. G54 lines the UMP pocket. ATP is bound by residues G55 and R59. UMP contacts are provided by residues D74 and 135–142 (TGNPYFST). ATP-binding residues include Y168 and D171.

Belongs to the UMP kinase family. Homohexamer.

It localises to the cytoplasm. The catalysed reaction is UMP + ATP = UDP + ADP. The protein operates within pyrimidine metabolism; CTP biosynthesis via de novo pathway; UDP from UMP (UMPK route): step 1/1. With respect to regulation, inhibited by UTP. Catalyzes the reversible phosphorylation of UMP to UDP. The chain is Uridylate kinase from Syntrophomonas wolfei subsp. wolfei (strain DSM 2245B / Goettingen).